The chain runs to 524 residues: BEL1-like homeodomain protein 3 (524 aa).

Residues 171–187 (SRYLKPTQQLLDEVVSV) are SR/KY domain. Composition is skewed to basic and acidic residues over residues 195–205 (NKKMKNDKGQD) and 216–235 (EDDKSQSQELSPSERQELQS). The tract at residues 195 to 236 (NKKMKNDKGQDFHNGSSDNITEDDKSQSQELSPSERQELQSK) is disordered. The BELL domain stretch occupies residues 229 to 300 (ERQELQSKKS…CLRDAIKEQI (72 aa)). A DNA-binding region (homeobox) is located at residues 346 to 408 (AWRPQRGLPE…NARVRLWKPM (63 aa)). Positions 429 to 463 (QDTKKMQETSQLKHEDSSSSQQQNQGNNNNNIPYT) are disordered. The segment covering 430–445 (DTKKMQETSQLKHEDS) has biased composition (basic and acidic residues). Residues 446-459 (SSSQQQNQGNNNNN) are compositionally biased toward low complexity.

This sequence belongs to the TALE/BELL homeobox family. May form heterodimeric complex with the TALE/KNOX protein STM. Interacts with OFP1, OFP2, OFP3, OFP4, OFP5 and OFP15.

It localises to the nucleus. Functionally, transcription factor that is responsive of the nuclear import of SHOOT MERISTEMLESS (STM). The polypeptide is BEL1-like homeodomain protein 3 (BLH3) (Arabidopsis thaliana (Mouse-ear cress)).